Here is a 206-residue protein sequence, read N- to C-terminus: VEL1-related protein SCY_5430 (206 aa).

A signal peptide spans 1-19; it reads MSFLNIFTFFSVLVSVATA.

This sequence belongs to the VEL1 family.

It is found in the cytoplasm. The protein resides in the cytosol. This chain is VEL1-related protein SCY_5430, found in Saccharomyces cerevisiae (strain YJM789) (Baker's yeast).